Reading from the N-terminus, the 1009-residue chain is Glutamate receptor ionotropic, delta-1 (1009 aa).

The first 20 residues, 1-20, serve as a signal peptide directing secretion; that stretch reads MEALTLWLLPWICQCVSVRA. The interaction with CBLN1 stretch occupies residues 21–436; it reads DSIIHIGAIF…ERPMGSRLQG (416 aa). The Extracellular portion of the chain corresponds to 21–562; that stretch reads DSIIHIGAIF…SIFSLFAPFD (542 aa). 3 disulfides stabilise this stretch: cysteine 80-cysteine 351, cysteine 96-cysteine 128, and cysteine 294-cysteine 306. Asparagine 131 and asparagine 200 each carry an N-linked (GlcNAc...) asparagine glycan. Residues asparagine 422 and asparagine 498 are each glycosylated (N-linked (GlcNAc...) asparagine). Ca(2+) contacts are provided by glutamate 527, valine 530, and aspartate 531. The helical transmembrane segment at 563–583 threads the bilayer; it reads FAVWACIAAAIPVVGVLIFVL. Over 584–637 the chain is Cytoplasmic; the sequence is NRIQAVRAQSAAQPRPSASATLHSAIWIVYGAFVQQGGESSVNSMAMRIVMGSW. A helical transmembrane segment spans residues 638-658; it reads WLFTLIVCSSYTANLAAFLTV. The Extracellular segment spans residues 659–830; it reads SRMDNPIRTF…ADGKSLKLHS (172 aa). Aspartate 753, aspartate 755, and serine 757 together coordinate Ca(2+). A helical membrane pass occupies residues 831-851; it reads FAGVFCILAIGLLLACLVAAL. Residues 852–1009 lie on the Cytoplasmic side of the membrane; the sequence is ELWWNSNRCH…ALDTSHGTSI (158 aa). Residues 930 to 942 show a composition bias toward polar residues; it reads FLPEQSSHGTSRT. The interval 930-954 is disordered; the sequence is FLPEQSSHGTSRTLSSGPSSNLPLP. Residues 943-954 show a composition bias toward low complexity; the sequence is LSSGPSSNLPLP.

It belongs to the glutamate-gated ion channel (TC 1.A.10.1) family. GRID1 subfamily. In terms of assembly, homodimer. Interacts (via extracellular N-terminal domain) with CBLN1 (via C1q domain), and more weakly with CBLN2; the interactions mediate the trans-synaptic adhesion complexes also with neurexins and are required for ligand-gated cation channel activity.

It is found in the postsynaptic cell membrane. The enzyme catalyses Ca(2+)(in) = Ca(2+)(out). It catalyses the reaction Na(+)(in) = Na(+)(out). Its function is as follows. Member of the ionotropic glutamate receptor family, which plays a crucial role in synaptic organization and signal transduction in the central nervous system. Although it shares structural features with ionotropic glutamate receptors, does not bind glutamate as a primary ligand. Instead, forms trans-synaptic adhesion complexes with presynaptic neurexins and cerebellins, regulating NMDA and AMPA receptor activity and influencing synaptic plasticity through signal transduction. In the presence of neurexins and cerebellins, forms cation-selective channels that are proposed to be gated by glycine and D-serine. However, recent research disputes this ligand-gated cation channel activity. Cation-selective ion channel can be triggered by GRM1 in dopaminergic neurons. Also acts as a receptor for GABA, modulating inhibitory synaptic plasticity through non-ionotropic mechanisms. The sequence is that of Glutamate receptor ionotropic, delta-1 from Homo sapiens (Human).